We begin with the raw amino-acid sequence, 1140 residues long: uncharacterized protein (1140 aa).

A run of 2 helical transmembrane segments spans residues 8–28 and 1098–1118; these read FLLFGFALGSFGWFVASSAFT and IAITFTGSAALLSTIIASGVV.

It to M.pneumoniae MPN_375 (in the N-terminal section), M.pneumoniae MPN_374 (in the central section) and M.pneumoniae MPN_373 (in the C-terminal section).

The protein localises to the cell membrane. This is an uncharacterized protein from Mycoplasma pneumoniae (strain ATCC 29342 / M129 / Subtype 1) (Mycoplasmoides pneumoniae).